A 349-amino-acid chain; its full sequence is Phosphoribosylformylglycinamidine cyclo-ligase (349 aa).

The protein belongs to the AIR synthase family.

The protein localises to the cytoplasm. The enzyme catalyses 2-formamido-N(1)-(5-O-phospho-beta-D-ribosyl)acetamidine + ATP = 5-amino-1-(5-phospho-beta-D-ribosyl)imidazole + ADP + phosphate + H(+). The protein operates within purine metabolism; IMP biosynthesis via de novo pathway; 5-amino-1-(5-phospho-D-ribosyl)imidazole from N(2)-formyl-N(1)-(5-phospho-D-ribosyl)glycinamide: step 2/2. This Lactobacillus helveticus (strain DPC 4571) protein is Phosphoribosylformylglycinamidine cyclo-ligase.